Here is a 283-residue protein sequence, read N- to C-terminus: Bifunctional protein FolD (283 aa).

NADP(+) contacts are provided by residues Gly-164 to Ser-166, Ile-189, and Ile-230.

Belongs to the tetrahydrofolate dehydrogenase/cyclohydrolase family. As to quaternary structure, homodimer.

The enzyme catalyses (6R)-5,10-methylene-5,6,7,8-tetrahydrofolate + NADP(+) = (6R)-5,10-methenyltetrahydrofolate + NADPH. It carries out the reaction (6R)-5,10-methenyltetrahydrofolate + H2O = (6R)-10-formyltetrahydrofolate + H(+). It functions in the pathway one-carbon metabolism; tetrahydrofolate interconversion. Catalyzes the oxidation of 5,10-methylenetetrahydrofolate to 5,10-methenyltetrahydrofolate and then the hydrolysis of 5,10-methenyltetrahydrofolate to 10-formyltetrahydrofolate. The polypeptide is Bifunctional protein FolD (Fusobacterium nucleatum subsp. nucleatum (strain ATCC 25586 / DSM 15643 / BCRC 10681 / CIP 101130 / JCM 8532 / KCTC 2640 / LMG 13131 / VPI 4355)).